A 224-amino-acid chain; its full sequence is Large ribosomal subunit protein uL1c (224 aa).

Belongs to the universal ribosomal protein uL1 family. As to quaternary structure, part of the 50S ribosomal subunit.

It localises to the plastid. The protein resides in the chloroplast. Functionally, binds directly to 23S rRNA. Might be involved in E site tRNA release (Potential). This chain is Large ribosomal subunit protein uL1c (rpl1), found in Cyanidioschyzon merolae (strain NIES-3377 / 10D) (Unicellular red alga).